The chain runs to 360 residues: MFKREETKPVFVGGVQIGGQKSVVIQSMTTADTRDVEKTLAEIQRLHDVGCQIVRLAVINEDAARAIKKIKERSPLPLVADIHFDHKLALIALESGIDKIRINPGNIGSKEKTQRVVEACRERNVPIRIGVNSGSVEKRLLDKYGYPSPEAIVESAMDHVQILEDLNYDNIVISLKSSDVPTMIQTYSLMAQKRNYPLHVGVTEAGTQFSGSIKSSVGIGTVLSMGIGDTIRVSLTADPVEEIKVAKQILRSLDIVNNDPVVIACPSCGRCAIDLIGLATKVEDAVSTLKVPLKVAVMGCAVNGPGEAREADVGVAGGNGEGLIFRNGEIVRKVKETELFEELMKEINEIVNEQKPTTVG.

Cys265, Cys268, Cys300, and Glu307 together coordinate [4Fe-4S] cluster.

The protein belongs to the IspG family. [4Fe-4S] cluster is required as a cofactor.

The catalysed reaction is (2E)-4-hydroxy-3-methylbut-2-enyl diphosphate + oxidized [flavodoxin] + H2O + 2 H(+) = 2-C-methyl-D-erythritol 2,4-cyclic diphosphate + reduced [flavodoxin]. The protein operates within isoprenoid biosynthesis; isopentenyl diphosphate biosynthesis via DXP pathway; isopentenyl diphosphate from 1-deoxy-D-xylulose 5-phosphate: step 5/6. Converts 2C-methyl-D-erythritol 2,4-cyclodiphosphate (ME-2,4cPP) into 1-hydroxy-2-methyl-2-(E)-butenyl 4-diphosphate. This is 4-hydroxy-3-methylbut-2-en-1-yl diphosphate synthase (flavodoxin) from Brevibacillus brevis (strain 47 / JCM 6285 / NBRC 100599).